The sequence spans 737 residues: Polyribonucleotide nucleotidyltransferase (737 aa).

Residues D514 and D520 each coordinate Mg(2+). One can recognise a KH domain in the interval 580 to 639 (PRIITVKIPVDKIGEVIGPKGKMINQIQEDTGADITIEDDGTIYIGAQAGSQAEAARATI). In terms of domain architecture, S1 motif spans 651-723 (GERYLGTVVK…SRGKLSLIPV (73 aa)).

Belongs to the polyribonucleotide nucleotidyltransferase family. Mg(2+) is required as a cofactor.

It is found in the cytoplasm. It catalyses the reaction RNA(n+1) + phosphate = RNA(n) + a ribonucleoside 5'-diphosphate. Functionally, involved in mRNA degradation. Catalyzes the phosphorolysis of single-stranded polyribonucleotides processively in the 3'- to 5'-direction. This is Polyribonucleotide nucleotidyltransferase from Streptomyces griseus subsp. griseus (strain JCM 4626 / CBS 651.72 / NBRC 13350 / KCC S-0626 / ISP 5235).